The following is a 376-amino-acid chain: NAD(P)H-quinone oxidoreductase subunit 1, chloroplastic (376 aa).

Helical transmembrane passes span 27-47 (LISIFLPIVLLLVISVLGVLV), 65-85 (PEYAGSLGIMQAIVDGVKLLI), 97-117 (WLFSIGPVLVVTPVILSYLVV), 130-150 (LGIFFWIVISSITPLGLLIAG), 166-186 (AAQSISYEIPLTLCVLSISLL), 251-271 (GIKFGIFYVASYLNLLVSSLF), 272-292 (AVVLYLGGWNFPIPTTLIFFI), 310-330 (LIIPIIHISITLAKTYLFIFF), and 353-373 (FLLPMAVGNLLLTASFQLTLF).

The protein belongs to the complex I subunit 1 family. As to quaternary structure, NDH is composed of at least 16 different subunits, 5 of which are encoded in the nucleus.

Its subcellular location is the plastid. The protein localises to the chloroplast thylakoid membrane. The catalysed reaction is a plastoquinone + NADH + (n+1) H(+)(in) = a plastoquinol + NAD(+) + n H(+)(out). The enzyme catalyses a plastoquinone + NADPH + (n+1) H(+)(in) = a plastoquinol + NADP(+) + n H(+)(out). NDH shuttles electrons from NAD(P)H:plastoquinone, via FMN and iron-sulfur (Fe-S) centers, to quinones in the photosynthetic chain and possibly in a chloroplast respiratory chain. The immediate electron acceptor for the enzyme in this species is believed to be plastoquinone. Couples the redox reaction to proton translocation, and thus conserves the redox energy in a proton gradient. This is NAD(P)H-quinone oxidoreductase subunit 1, chloroplastic from Chara vulgaris (Common stonewort).